The following is a 301-amino-acid chain: Glutamyl-Q tRNA(Asp) synthetase (301 aa).

Residues 8–12 and Glu44 contribute to the L-glutamate site; that span reads RFAPS. The 'HIGH' region signature appears at 11–21; sequence PSPTGPLHFGS. Positions 100, 102, 122, and 126 each coordinate Zn(2+). Residues Tyr180 and Arg198 each contribute to the L-glutamate site. The 'KMSKS' region motif lies at 236–240; that stretch reads KLSKQ. Lys239 is an ATP binding site.

Belongs to the class-I aminoacyl-tRNA synthetase family. GluQ subfamily. Zn(2+) is required as a cofactor.

Functionally, catalyzes the tRNA-independent activation of glutamate in presence of ATP and the subsequent transfer of glutamate onto a tRNA(Asp). Glutamate is transferred on the 2-amino-5-(4,5-dihydroxy-2-cyclopenten-1-yl) moiety of the queuosine in the wobble position of the QUC anticodon. The sequence is that of Glutamyl-Q tRNA(Asp) synthetase from Dechloromonas aromatica (strain RCB).